A 1770-amino-acid chain; its full sequence is AF4/FMR2 family member lilli (1770 aa).

3 stretches are compositionally biased toward low complexity: residues 1 to 19, 154 to 204, and 227 to 269; these read MAQQ…HPHQ, LGHS…YLKQ, and PSSS…GTTP. Disordered stretches follow at residues 1-28, 134-327, 402-660, 761-805, 822-1173, and 1291-1390; these read MAQQ…NQLQ, SRHA…EKDI, TSLL…PGNV, LHSA…LQLP, MQKA…KQGQ, and KHEH…QISK. Residues 402–414 show a composition bias toward polar residues; it reads TSLLTTPPHASQG. Positions 434 to 447 are enriched in low complexity; the sequence is KAAAALSPTAAAKP. Residues 448-461 are compositionally biased toward basic and acidic residues; that stretch reads LKTEKNHTLEKQDS. The segment covering 463-474 has biased composition (acidic residues); sequence LENDLELSESED. Phosphoserine occurs at positions 470 and 472. The segment covering 483–503 has biased composition (low complexity); sequence SAGNSSNSSESDSSESGSESS. Residues 511-520 show a composition bias toward basic residues; that stretch reads QHHHHNHHHQ. A compositionally biased stretch (low complexity) spans 521–552; sequence QQQQQLQQQQQQQLLQQKQQHQQILQQQQRQL. Residues 582–614 show a composition bias toward gly residues; that stretch reads FGSGGAGNGGCSTASSGGGGGGSGSGGGSGSSS. Residues 615–625 are compositionally biased toward low complexity; sequence GIGTMSSGSSS. 2 stretches are compositionally biased toward polar residues: residues 626–638 and 647–659; these read NKTP…NKWT and ANQT…SPGN. Low complexity predominate over residues 768–800; it reads SDSGTSGSGSTSSSSSSSDSAPGEVVPMPGPGE. The segment covering 844–854 has biased composition (basic residues); it reads QRQKKPRKKKP. A phosphoserine mark is found at S863 and S864. 5 stretches are compositionally biased toward low complexity: residues 880-893, 909-928, 994-1028, 1071-1081, and 1111-1131; these read AAAA…ATAT, QQQS…SSSQ, ANAS…SSSS, SGSSSPSSSSS, and SQHS…SSTS. Positions 900–912 form a DNA-binding region, a.T hook; the sequence is KKGRGRPRKQQQS. Phosphoserine is present on residues S920 and S922. Composition is skewed to basic and acidic residues over residues 1295-1312 and 1321-1355; these read PHPV…ESKF and FQLK…EREQ. A Phosphoserine modification is found at S1442. Composition is skewed to low complexity over residues 1483–1499 and 1656–1676; these read AAAT…TSTA and GNTP…SGSN. Disordered stretches follow at residues 1483–1502 and 1656–1683; these read AAAT…APPA and GNTP…GKIV.

It belongs to the AF4 family.

The protein resides in the nucleus. Its function is as follows. Has a role in transcriptional regulation. Acts in parallel with the Ras/MAPK and the PI3K/PKB pathways in the control of cell identity and cellular growth. Essential for regulation of the cytoskeleton and cell growth but not for cell proliferation or growth rate. Required specifically for the microtubule-based basal transport of lipid droplets. Plays a partially redundant function downstream of Raf in cell fate specification in the developing eye. Pair-rule protein that regulates embryonic cellularization, gastrulation and segmentation. In Drosophila pseudoobscura pseudoobscura (Fruit fly), this protein is AF4/FMR2 family member lilli.